The primary structure comprises 84 residues: RNA-binding protein Hfq (84 aa).

Residues 11 to 71 (DTFLNHVRKN…ISTIMPGHPV (61 aa)) enclose the Sm domain.

It belongs to the Hfq family. As to quaternary structure, homohexamer.

Its function is as follows. RNA chaperone that binds small regulatory RNA (sRNAs) and mRNAs to facilitate mRNA translational regulation in response to envelope stress, environmental stress and changes in metabolite concentrations. Also binds with high specificity to tRNAs. This chain is RNA-binding protein Hfq, found in Methylobacterium nodulans (strain LMG 21967 / CNCM I-2342 / ORS 2060).